A 287-amino-acid polypeptide reads, in one-letter code: MLARFPLYLRLVRMDKPIGSLLLLWPTLNALWIASDGHPRWPLIVIFALGTLLMRSAGCAMNDYADRDFDRHVKRTADRPLTSGKIRAWEAVAIAVGLSFVAFLLILPLNTLTKELSVVALFVAGTYPFMKRFFAIPQAYLGIAFGFGIPMAFAAVQNTVPPLAWVMLIANVFWSIAYDTEYAMVDRDDDIKIGIRTSALTFGRFDVAAVMACYAVTLGIYVWIGIALGFGAAYWVGWAAAAGCAVYHYTLIKGRERMPCFAAFRHNNWLGGVLFAGIAAHYLMAGS.

6 helical membrane-spanning segments follow: residues 41–61, 89–109, 133–153, 158–178, 218–238, and 267–287; these read WPLI…GCAM, WEAV…ILPL, FFAI…PMAF, NTVP…SIAY, LGIY…WVGW, and NNWL…MAGS.

It belongs to the UbiA prenyltransferase family. Requires Mg(2+) as cofactor.

Its subcellular location is the cell inner membrane. The catalysed reaction is all-trans-octaprenyl diphosphate + 4-hydroxybenzoate = 4-hydroxy-3-(all-trans-octaprenyl)benzoate + diphosphate. It functions in the pathway cofactor biosynthesis; ubiquinone biosynthesis. In terms of biological role, catalyzes the prenylation of para-hydroxybenzoate (PHB) with an all-trans polyprenyl group. Mediates the second step in the final reaction sequence of ubiquinone-8 (UQ-8) biosynthesis, which is the condensation of the polyisoprenoid side chain with PHB, generating the first membrane-bound Q intermediate 3-octaprenyl-4-hydroxybenzoate. This is 4-hydroxybenzoate octaprenyltransferase from Burkholderia multivorans (strain ATCC 17616 / 249).